A 125-amino-acid polypeptide reads, in one-letter code: MTNLLKKFNEQQMQVLAKEVPEFRPGDDLKVTFKVVDSTSERIQIFEGVCISKRNRGLHSSFAVRKVSHGESIVSQFFIYSPALVSVQVTRRGKVRRAKLYYLCKLFGKAARIKERATYKNNKSN.

Belongs to the bacterial ribosomal protein bL19 family.

This protein is located at the 30S-50S ribosomal subunit interface and may play a role in the structure and function of the aminoacyl-tRNA binding site. The sequence is that of Large ribosomal subunit protein bL19 from Wolbachia sp. subsp. Brugia malayi (strain TRS).